A 510-amino-acid chain; its full sequence is NAD(P)H-quinone oxidoreductase subunit 2 A, chloroplastic (510 aa).

The next 13 helical transmembrane spans lie at 26-46, 57-77, 99-119, 124-144, 149-169, 183-203, 227-247, 295-315, 323-342, 354-374, 395-415, 418-438, and 484-504; these read LFDGSFIFPEGILIFGLILLL, IPWFYFISSISLVMSITALLF, IFQFLILLCSTLCIPLSVEYI, MAITEFLLFVLTATLGGMFLC, LITIFVAPECFSLCSYLLSGY, YLLMGGASSSILVHGFSWLYG, PGISIALIFITVGIGFKLSPA, WHPLLEILAILSMILGNLIAI, MLAYSSIGQIGYVIIGIIVG, YMLFYISMNLGTFACIVLFGL, ALSLALCLLSLGGLPPLAGFF, LHLFWCGWQAGLYFLVSIGLF, and MIVCVIASTIPGISMNPIIAI.

The protein belongs to the complex I subunit 2 family. In terms of assembly, NDH is composed of at least 16 different subunits, 5 of which are encoded in the nucleus.

The protein resides in the plastid. It localises to the chloroplast thylakoid membrane. The catalysed reaction is a plastoquinone + NADH + (n+1) H(+)(in) = a plastoquinol + NAD(+) + n H(+)(out). The enzyme catalyses a plastoquinone + NADPH + (n+1) H(+)(in) = a plastoquinol + NADP(+) + n H(+)(out). Functionally, NDH shuttles electrons from NAD(P)H:plastoquinone, via FMN and iron-sulfur (Fe-S) centers, to quinones in the photosynthetic chain and possibly in a chloroplast respiratory chain. The immediate electron acceptor for the enzyme in this species is believed to be plastoquinone. Couples the redox reaction to proton translocation, and thus conserves the redox energy in a proton gradient. The polypeptide is NAD(P)H-quinone oxidoreductase subunit 2 A, chloroplastic (Oenothera biennis (German evening primrose)).